Here is a 242-residue protein sequence, read N- to C-terminus: Biosynthetic peptidoglycan transglycosylase (242 aa).

Residues 19–39 (ILAALAVFWGGGIALFSVVPV) form a helical membrane-spanning segment.

Belongs to the glycosyltransferase 51 family.

The protein localises to the cell inner membrane. The catalysed reaction is [GlcNAc-(1-&gt;4)-Mur2Ac(oyl-L-Ala-gamma-D-Glu-L-Lys-D-Ala-D-Ala)](n)-di-trans,octa-cis-undecaprenyl diphosphate + beta-D-GlcNAc-(1-&gt;4)-Mur2Ac(oyl-L-Ala-gamma-D-Glu-L-Lys-D-Ala-D-Ala)-di-trans,octa-cis-undecaprenyl diphosphate = [GlcNAc-(1-&gt;4)-Mur2Ac(oyl-L-Ala-gamma-D-Glu-L-Lys-D-Ala-D-Ala)](n+1)-di-trans,octa-cis-undecaprenyl diphosphate + di-trans,octa-cis-undecaprenyl diphosphate + H(+). It participates in cell wall biogenesis; peptidoglycan biosynthesis. Functionally, peptidoglycan polymerase that catalyzes glycan chain elongation from lipid-linked precursors. This is Biosynthetic peptidoglycan transglycosylase from Salmonella choleraesuis (strain SC-B67).